A 660-amino-acid chain; its full sequence is Bifunctional polymyxin resistance protein ArnA (660 aa).

Residues 1 to 304 are formyltransferase ArnAFT; that stretch reads MKAVIFAYHD…TLGLVAGARL (304 aa). The active-site Proton donor; for formyltransferase activity is His104. (6R)-10-formyltetrahydrofolate is bound by residues Arg114 and 136-140; that span reads VKRAD. A dehydrogenase ArnADH region spans residues 314-660; that stretch reads RRIRVLILGV…RSVDIAERAS (347 aa). Residues Asp347 and 368 to 369 contribute to the NAD(+) site; that span reads DI. Residues Ala393, Tyr398, and 432–433 each bind UDP-alpha-D-glucuronate; that span reads TS. Glu434 (proton acceptor; for decarboxylase activity) is an active-site residue. UDP-alpha-D-glucuronate contacts are provided by residues Arg460, Asn492, 526–535, and Tyr613; that span reads KLIDGGQQKR. The active-site Proton donor; for decarboxylase activity is the Arg619.

In the N-terminal section; belongs to the Fmt family. UDP-L-Ara4N formyltransferase subfamily. It in the C-terminal section; belongs to the NAD(P)-dependent epimerase/dehydratase family. UDP-glucuronic acid decarboxylase subfamily. In terms of assembly, homohexamer, formed by a dimer of trimers.

The enzyme catalyses UDP-alpha-D-glucuronate + NAD(+) = UDP-beta-L-threo-pentopyranos-4-ulose + CO2 + NADH. It catalyses the reaction UDP-4-amino-4-deoxy-beta-L-arabinose + (6R)-10-formyltetrahydrofolate = UDP-4-deoxy-4-formamido-beta-L-arabinose + (6S)-5,6,7,8-tetrahydrofolate + H(+). Its pathway is nucleotide-sugar biosynthesis; UDP-4-deoxy-4-formamido-beta-L-arabinose biosynthesis; UDP-4-deoxy-4-formamido-beta-L-arabinose from UDP-alpha-D-glucuronate: step 1/3. It participates in nucleotide-sugar biosynthesis; UDP-4-deoxy-4-formamido-beta-L-arabinose biosynthesis; UDP-4-deoxy-4-formamido-beta-L-arabinose from UDP-alpha-D-glucuronate: step 3/3. It functions in the pathway bacterial outer membrane biogenesis; lipopolysaccharide biosynthesis. Functionally, bifunctional enzyme that catalyzes the oxidative decarboxylation of UDP-glucuronic acid (UDP-GlcUA) to UDP-4-keto-arabinose (UDP-Ara4O) and the addition of a formyl group to UDP-4-amino-4-deoxy-L-arabinose (UDP-L-Ara4N) to form UDP-L-4-formamido-arabinose (UDP-L-Ara4FN). The modified arabinose is attached to lipid A and is required for resistance to polymyxin and cationic antimicrobial peptides. This chain is Bifunctional polymyxin resistance protein ArnA (arnA), found in Salmonella typhimurium (strain LT2 / SGSC1412 / ATCC 700720).